The sequence spans 362 residues: Glucuronokinase 1 (362 aa).

126–136 (PRQTGLSGSSA) contributes to the ATP binding site. Catalysis depends on D179, which acts as the Proton acceptor.

It belongs to the GHMP kinase family. It depends on Mg(2+) as a cofactor. Requires Mn(2+) as cofactor. Co(2+) serves as cofactor. As to expression, highly expressed in pollen. Detected in seedlings, inflorescences, seeds, leaves and roots.

It carries out the reaction D-glucuronate + ATP = 1-phospho-alpha-D-glucuronate + ADP + H(+). Its function is as follows. Sugar-1-kinase with a strict substrate specificity for D-glucuronic acid and ATP. Involved in the biosynthesis of UDP-glucuronic acid (UDP-GlcA), providing nucleotide sugars for cell-wall polymers. May be also involved in a salvage pathway for glucuronic acid. The sequence is that of Glucuronokinase 1 (GLCAK1) from Arabidopsis thaliana (Mouse-ear cress).